Here is a 390-residue protein sequence, read N- to C-terminus: Chorismate synthase (390 aa).

NADP(+) is bound by residues arginine 40 and arginine 46. FMN contacts are provided by residues 128–130 (RAS), 251–252 (QA), glycine 296, 311–315 (KPIPT), and arginine 339.

It belongs to the chorismate synthase family. Homotetramer. It depends on FMNH2 as a cofactor.

The catalysed reaction is 5-O-(1-carboxyvinyl)-3-phosphoshikimate = chorismate + phosphate. It functions in the pathway metabolic intermediate biosynthesis; chorismate biosynthesis; chorismate from D-erythrose 4-phosphate and phosphoenolpyruvate: step 7/7. Catalyzes the anti-1,4-elimination of the C-3 phosphate and the C-6 proR hydrogen from 5-enolpyruvylshikimate-3-phosphate (EPSP) to yield chorismate, which is the branch point compound that serves as the starting substrate for the three terminal pathways of aromatic amino acid biosynthesis. This reaction introduces a second double bond into the aromatic ring system. In Sulfurihydrogenibium sp. (strain YO3AOP1), this protein is Chorismate synthase.